The sequence spans 246 residues: MKICIFFTLLGTVAAFPTEDNDDRIVGGYTCQEHSVPYQVSLNAGSHICGGSLITDQWVLSAAHCYHPQLQVRLGEHNIYEIEGAEQFIDAAKMILHPDYDKWTVDNDIMLIKLKSPATLNSKVSTIPLPQYCPTAGTECLVSGWGVLKFGFESPSVLQCLDAPVLSDSVCHKAYPRQITNNMFCLGFLEGGKDSCQYDSGGPVVCNGEVQGIVSWGDGCALEGKPGVYTKVCNYLNWIHQTIAEN.

Residues 1–15 form the signal peptide; sequence MKICIFFTLLGTVAA. A propeptide spans 16 to 24 (activation peptide); the sequence is FPTEDNDDR. The Peptidase S1 domain maps to 25–244; sequence IVGGYTCQEH…YLNWIHQTIA (220 aa). Intrachain disulfides connect Cys31/Cys160, Cys49/Cys65, Cys133/Cys233, Cys140/Cys206, Cys171/Cys185, and Cys196/Cys220. His64 functions as the Charge relay system in the catalytic mechanism. 3 residues coordinate Ca(2+): Glu76, Asn78, and Glu86. The Charge relay system role is filled by Asp108. Ser200 serves as the catalytic Charge relay system.

This sequence belongs to the peptidase S1 family. The cofactor is Ca(2+).

It localises to the secreted. The protein resides in the extracellular space. The enzyme catalyses Preferential cleavage: Arg-|-Xaa, Lys-|-Xaa.. The protein is Trypsin V-A of Rattus norvegicus (Rat).